The chain runs to 178 residues: MAEDQAPREETVEAPELTEAPEIDELETLRAERDELRDRFMRALADAENSRKRADRDRREAEQYGGTRLARDLLPVYDNLSRALEVATDEQRAAAAALIEGVELTLRELRNVMNKHGVRPITPQVGDTFDPQQHQAMFEAPVPGTKAGQIIQVMTEGFMIHDRLLRPAQVGVSSNTGA.

Over residues 1–11 the composition is skewed to basic and acidic residues; it reads MAEDQAPREET. The segment at 1 to 30 is disordered; sequence MAEDQAPREETVEAPELTEAPEIDELETLR.

It belongs to the GrpE family. Homodimer.

It is found in the cytoplasm. Participates actively in the response to hyperosmotic and heat shock by preventing the aggregation of stress-denatured proteins, in association with DnaK and GrpE. It is the nucleotide exchange factor for DnaK and may function as a thermosensor. Unfolded proteins bind initially to DnaJ; upon interaction with the DnaJ-bound protein, DnaK hydrolyzes its bound ATP, resulting in the formation of a stable complex. GrpE releases ADP from DnaK; ATP binding to DnaK triggers the release of the substrate protein, thus completing the reaction cycle. Several rounds of ATP-dependent interactions between DnaJ, DnaK and GrpE are required for fully efficient folding. This is Protein GrpE from Cereibacter sphaeroides (strain ATCC 17023 / DSM 158 / JCM 6121 / CCUG 31486 / LMG 2827 / NBRC 12203 / NCIMB 8253 / ATH 2.4.1.) (Rhodobacter sphaeroides).